The chain runs to 344 residues: Heat-inducible transcription repressor HrcA (344 aa).

The protein belongs to the HrcA family.

Functionally, negative regulator of class I heat shock genes (grpE-dnaK-dnaJ and groELS operons). Prevents heat-shock induction of these operons. In Streptococcus agalactiae serotype III (strain NEM316), this protein is Heat-inducible transcription repressor HrcA.